Consider the following 129-residue polypeptide: Small ribosomal subunit protein uS11 (129 aa).

This sequence belongs to the universal ribosomal protein uS11 family. Part of the 30S ribosomal subunit. Interacts with proteins S7 and S18. Binds to IF-3.

Functionally, located on the platform of the 30S subunit, it bridges several disparate RNA helices of the 16S rRNA. Forms part of the Shine-Dalgarno cleft in the 70S ribosome. The protein is Small ribosomal subunit protein uS11 of Bartonella bacilliformis (strain ATCC 35685 / KC583 / Herrer 020/F12,63).